A 503-amino-acid chain; its full sequence is UDP-N-acetylmuramoylalanine--D-glutamate ligase (503 aa).

129–135 is an ATP binding site; that stretch reads GTNGKTT.

This sequence belongs to the MurCDEF family.

It is found in the cytoplasm. It catalyses the reaction UDP-N-acetyl-alpha-D-muramoyl-L-alanine + D-glutamate + ATP = UDP-N-acetyl-alpha-D-muramoyl-L-alanyl-D-glutamate + ADP + phosphate + H(+). It participates in cell wall biogenesis; peptidoglycan biosynthesis. Functionally, cell wall formation. Catalyzes the addition of glutamate to the nucleotide precursor UDP-N-acetylmuramoyl-L-alanine (UMA). The protein is UDP-N-acetylmuramoylalanine--D-glutamate ligase of Burkholderia cenocepacia (strain HI2424).